The following is a 471-amino-acid chain: Glutamate--tRNA ligase (471 aa).

The short motif at 9–19 is the 'HIGH' region element; that stretch reads PSPTGYLHVGG. 4 residues coordinate Zn(2+): Cys-98, Cys-100, Cys-125, and His-127. Residues 237–241 carry the 'KMSKS' region motif; the sequence is KLSKR. ATP is bound at residue Lys-240.

Belongs to the class-I aminoacyl-tRNA synthetase family. Glutamate--tRNA ligase type 1 subfamily. In terms of assembly, monomer. It depends on Zn(2+) as a cofactor.

The protein resides in the cytoplasm. The catalysed reaction is tRNA(Glu) + L-glutamate + ATP = L-glutamyl-tRNA(Glu) + AMP + diphosphate. Its function is as follows. Catalyzes the attachment of glutamate to tRNA(Glu) in a two-step reaction: glutamate is first activated by ATP to form Glu-AMP and then transferred to the acceptor end of tRNA(Glu). The chain is Glutamate--tRNA ligase from Shigella sonnei (strain Ss046).